Reading from the N-terminus, the 564-residue chain is Juvenile hormone esterase (564 aa).

Positions 1-19 are cleaved as a signal peptide; sequence MTSHVLALAFLLHACTALA. Asn-81 carries an N-linked (GlcNAc...) asparagine glycan. An intrachain disulfide couples Cys-89 to Cys-109. N-linked (GlcNAc...) asparagine glycosylation occurs at Asn-180. Ser-220 (acyl-ester intermediate) is an active-site residue. Glu-351 (charge relay system) is an active-site residue. N-linked (GlcNAc...) asparagine glycosylation is present at Asn-402. His-465 functions as the Charge relay system in the catalytic mechanism. The N-linked (GlcNAc...) asparagine glycan is linked to Asn-515.

It belongs to the type-B carboxylesterase/lipase family.

The enzyme catalyses juvenile hormone I + H2O = juvenile hormone I carboxylate + methanol + H(+). It catalyses the reaction juvenile hormone III + H2O = juvenile hormone III carboxylate + methanol + H(+). Functionally, JH esterase plays a crucial role in the decrease of JH activity in lepidopteran insects, by hydrolyzing the methyl ester of JH. It is also involved in the transport of JH. The protein is Juvenile hormone esterase of Heliothis virescens (Tobacco budworm moth).